The chain runs to 458 residues: tRNA modification GTPase MnmE (458 aa).

Residues Arg26, Glu88, and Arg127 each coordinate (6S)-5-formyl-5,6,7,8-tetrahydrofolate. The region spanning Gly224–Phe378 is the TrmE-type G domain. Position 234 (Asn234) interacts with K(+). GTP contacts are provided by residues Asn234–Ser239, Thr253–Thr259, and Asp278–Gly281. Ser238 lines the Mg(2+) pocket. Positions 253, 255, and 258 each coordinate K(+). Mg(2+) is bound at residue Thr259. Lys458 lines the (6S)-5-formyl-5,6,7,8-tetrahydrofolate pocket.

It belongs to the TRAFAC class TrmE-Era-EngA-EngB-Septin-like GTPase superfamily. TrmE GTPase family. Homodimer. Heterotetramer of two MnmE and two MnmG subunits. The cofactor is K(+).

The protein resides in the cytoplasm. Its function is as follows. Exhibits a very high intrinsic GTPase hydrolysis rate. Involved in the addition of a carboxymethylaminomethyl (cmnm) group at the wobble position (U34) of certain tRNAs, forming tRNA-cmnm(5)s(2)U34. The sequence is that of tRNA modification GTPase MnmE from Streptococcus pyogenes serotype M28 (strain MGAS6180).